The following is a 210-amino-acid chain: Uracil phosphoribosyltransferase (210 aa).

5-phospho-alpha-D-ribose 1-diphosphate-binding positions include arginine 78, arginine 103, and 130 to 138 (DPMLATGGT). Uracil contacts are provided by residues isoleucine 193 and 198–200 (GDA). Aspartate 199 contributes to the 5-phospho-alpha-D-ribose 1-diphosphate binding site.

The protein belongs to the UPRTase family. It depends on Mg(2+) as a cofactor.

It carries out the reaction UMP + diphosphate = 5-phospho-alpha-D-ribose 1-diphosphate + uracil. It participates in pyrimidine metabolism; UMP biosynthesis via salvage pathway; UMP from uracil: step 1/1. Its activity is regulated as follows. Allosterically activated by GTP. Its function is as follows. Catalyzes the conversion of uracil and 5-phospho-alpha-D-ribose 1-diphosphate (PRPP) to UMP and diphosphate. This Xanthomonas campestris pv. campestris (strain 8004) protein is Uracil phosphoribosyltransferase.